A 236-amino-acid chain; its full sequence is Ribose-5-phosphate isomerase A (236 aa).

Substrate-binding positions include 31-34 (TGST), 84-87 (DGAD), and 97-100 (KGGG). Glutamate 106 acts as the Proton acceptor in catalysis. Lysine 124 lines the substrate pocket.

The protein belongs to the ribose 5-phosphate isomerase family. In terms of assembly, homodimer.

It catalyses the reaction aldehydo-D-ribose 5-phosphate = D-ribulose 5-phosphate. The protein operates within carbohydrate degradation; pentose phosphate pathway; D-ribose 5-phosphate from D-ribulose 5-phosphate (non-oxidative stage): step 1/1. In terms of biological role, catalyzes the reversible conversion of ribose-5-phosphate to ribulose 5-phosphate. The sequence is that of Ribose-5-phosphate isomerase A from Polynucleobacter asymbioticus (strain DSM 18221 / CIP 109841 / QLW-P1DMWA-1) (Polynucleobacter necessarius subsp. asymbioticus).